Reading from the N-terminus, the 373-residue chain is 3 beta-hydroxysteroid dehydrogenase/Delta 5--&gt;4-isomerase type 1 (373 aa).

NADP(+)-binding positions include 10-15, Tyr-155, and Lys-159; that span reads GAGGFV. Lys-159 serves as the catalytic Proton donor. A helical membrane pass occupies residues 288–308; sequence LPLLYWLAFLLETVSFLLRPV.

This sequence belongs to the 3-beta-HSD family. As to expression, steroidogenic tissues (includes testes, ovaries and adrenal glands).

Its subcellular location is the endoplasmic reticulum membrane. The protein resides in the mitochondrion membrane. It carries out the reaction a 3beta-hydroxy-Delta(5)-steroid + NAD(+) = a 3-oxo-Delta(5)-steroid + NADH + H(+). It catalyses the reaction pregnenolone + NAD(+) = pregn-5-ene-3,20-dione + NADH + H(+). The catalysed reaction is 3beta-hydroxyandrost-5-en-17-one + NAD(+) = androst-5-ene-3,17-dione + NADH + H(+). The enzyme catalyses androst-5-en-3beta,17beta-diol + NAD(+) = 17beta-hydroxy-androst-5-en-3-one + NADH + H(+). It carries out the reaction a 3beta-hydroxysteroid + NADP(+) = a 3-oxosteroid + NADPH + H(+). It catalyses the reaction 5alpha-androstane-3beta,17beta-diol + NADP(+) = 17beta-hydroxy-5alpha-androstan-3-one + NADPH + H(+). The catalysed reaction is 3beta-hydroxy-5alpha-androstan-17-one + NADP(+) = 5alpha-androstan-3,17-dione + NADPH + H(+). The enzyme catalyses a 3-oxo-Delta(5)-steroid = a 3-oxo-Delta(4)-steroid. It carries out the reaction pregn-5-ene-3,20-dione = progesterone. It catalyses the reaction androst-5-ene-3,17-dione = androst-4-ene-3,17-dione. The catalysed reaction is 17beta-hydroxy-androst-5-en-3-one = testosterone. The enzyme catalyses 5alpha-androstane-3beta,17beta-diol + NAD(+) = 17beta-hydroxy-5alpha-androstan-3-one + NADH + H(+). Its pathway is steroid hormone biosynthesis. The protein operates within steroid metabolism. Functionally, a bifunctional enzyme responsible for the oxidation and isomerization of 3beta-hydroxy-Delta(5)-steroid precursors to 3-oxo-Delta(4)-steroids, an essential step in steroid hormone biosynthesis. Specifically catalyzes the conversion of pregnenolone to progesterone, 17alpha-hydroxypregnenolone to 17alpha-hydroxyprogesterone, dehydroepiandrosterone (DHEA) to 4-androstenedione, and androstenediol to testosterone. Additionally, catalyzes the interconversion between 3beta-hydroxy and 3-oxo-5alpha-androstane steroids controlling the bioavalability of the active forms. Specifically converts dihydrotestosterone to its inactive form 5alpha-androstanediol, that does not bind androgen receptor/AR. Also converts androstanedione, a precursor of testosterone and estrone, to epiandrosterone. Expected to use NAD(+) as preferred electron donor for the 3-beta-hydroxy-steroid dehydrogenase activity and NADPH for the 3-ketosteroid reductase activity. The protein is 3 beta-hydroxysteroid dehydrogenase/Delta 5--&gt;4-isomerase type 1 of Mus musculus (Mouse).